Consider the following 581-residue polypeptide: NADP-dependent malic enzyme 1 (581 aa).

Catalysis depends on Y129, which acts as the Proton donor. R182 contributes to the NADP(+) binding site. K200 (proton acceptor) is an active-site residue. A divalent metal cation is bound by residues E272, D273, and D296. Residues D296, 325–341 (LFLG…ELIA), and N437 contribute to the NADP(+) site.

It belongs to the malic enzymes family. Homohexamers and homooctamers. It depends on Mg(2+) as a cofactor. Mn(2+) is required as a cofactor. Specifically expressed in roots (only in steles of secondary roots).

It is found in the cytoplasm. It carries out the reaction (S)-malate + NADP(+) = pyruvate + CO2 + NADPH. It catalyses the reaction oxaloacetate + H(+) = pyruvate + CO2. This Arabidopsis thaliana (Mouse-ear cress) protein is NADP-dependent malic enzyme 1 (NADP-ME1).